A 1025-amino-acid polypeptide reads, in one-letter code: Retinoblastoma-related protein (1025 aa).

Positions 1–20 (MEDHPPKPSIPTADASLSNH) are disordered. A domain A region spans residues 422-623 (TPVTTAMTTA…EKGSSMYNSL (202 aa)). Positions 422–875 (TPVTTAMTTA…NEIFIPAVKP (454 aa)) are pocket. The spacer stretch occupies residues 624-744 (TVARPALSAE…PGAGGETCAE (121 aa)). The segment at 745 to 875 (TAINVFFSKI…NEIFIPAVKP (131 aa)) is domain B.

Belongs to the retinoblastoma protein (RB) family.

The protein localises to the nucleus. In terms of biological role, regulator of biological processes that recruits a histone deacetylase to control gene transcription. May play a role in the entry into mitosis, negatively regulating the cell proliferation. Formation of stable complexes with geminiviridae replication-associated proteins may create a cellular environment which favors viral DNA replication. This is Retinoblastoma-related protein (pRB) from Camellia sinensis (Tea plant).